Reading from the N-terminus, the 188-residue chain is Ribosome-recycling factor (188 aa).

The protein belongs to the RRF family.

The protein localises to the cytoplasm. In terms of biological role, responsible for the release of ribosomes from messenger RNA at the termination of protein biosynthesis. May increase the efficiency of translation by recycling ribosomes from one round of translation to another. The chain is Ribosome-recycling factor from Cereibacter sphaeroides (strain ATCC 17029 / ATH 2.4.9) (Rhodobacter sphaeroides).